Here is a 235-residue protein sequence, read N- to C-terminus: Protocatechuate 3,4-dioxygenase beta chain (235 aa).

Fe cation is bound by residues tyrosine 107, tyrosine 146, histidine 159, and histidine 161.

Belongs to the intradiol ring-cleavage dioxygenase family. In terms of assembly, the enzyme is an oligomer of 12 copies of the alpha and beta chains. The cofactor is Fe(3+).

The enzyme catalyses 3,4-dihydroxybenzoate + O2 = 3-carboxy-cis,cis-muconate + 2 H(+). It functions in the pathway aromatic compound metabolism; beta-ketoadipate pathway; 3-carboxy-cis,cis-muconate from 3,4-dihydroxybenzoate: step 1/1. In terms of biological role, plays an essential role in the utilization of numerous aromatic and hydroaromatic compounds via the beta-ketoadipate pathway. This chain is Protocatechuate 3,4-dioxygenase beta chain (pcaH), found in Burkholderia cepacia (Pseudomonas cepacia).